A 536-amino-acid polypeptide reads, in one-letter code: Membrane protein insertase YidC (536 aa).

The next 4 membrane-spanning stretches (helical) occupy residues 5-25, 353-373, 418-438, and 495-515; these read LIIA…IFPT, GNYG…FFPL, VNPL…FGLY, and MLML…GLVI.

Belongs to the OXA1/ALB3/YidC family. Type 1 subfamily. In terms of assembly, interacts with the Sec translocase complex via SecD. Specifically interacts with transmembrane segments of nascent integral membrane proteins during membrane integration.

The protein localises to the cell inner membrane. Required for the insertion and/or proper folding and/or complex formation of integral membrane proteins into the membrane. Involved in integration of membrane proteins that insert both dependently and independently of the Sec translocase complex, as well as at least some lipoproteins. Aids folding of multispanning membrane proteins. The chain is Membrane protein insertase YidC from Geobacter sp. (strain M21).